We begin with the raw amino-acid sequence, 635 residues long: 1-deoxy-D-xylulose-5-phosphate synthase (635 aa).

Residues His-76 and 117-119 (GHS) contribute to the thiamine diphosphate site. Residue Asp-148 coordinates Mg(2+). Thiamine diphosphate is bound by residues 149–150 (GA), Asn-177, Tyr-294, and Glu-379. Asn-177 serves as a coordination point for Mg(2+).

Belongs to the transketolase family. DXPS subfamily. Homodimer. Requires Mg(2+) as cofactor. Thiamine diphosphate serves as cofactor.

The catalysed reaction is D-glyceraldehyde 3-phosphate + pyruvate + H(+) = 1-deoxy-D-xylulose 5-phosphate + CO2. The protein operates within metabolic intermediate biosynthesis; 1-deoxy-D-xylulose 5-phosphate biosynthesis; 1-deoxy-D-xylulose 5-phosphate from D-glyceraldehyde 3-phosphate and pyruvate: step 1/1. Catalyzes the acyloin condensation reaction between C atoms 2 and 3 of pyruvate and glyceraldehyde 3-phosphate to yield 1-deoxy-D-xylulose-5-phosphate (DXP). This chain is 1-deoxy-D-xylulose-5-phosphate synthase, found in Neisseria meningitidis serogroup C (strain 053442).